A 324-amino-acid polypeptide reads, in one-letter code: Elongation factor Ts, mitochondrial (324 aa).

Residues 1–44 (MSLLRSLRFFPVACTGRSARAVLLQPSQPWHTLHAGPSLSSSAS) constitute a mitochondrion transit peptide. N6-succinyllysine occurs at positions 75 and 132. Residue S269 is modified to Phosphoserine.

The protein belongs to the EF-Ts family.

The protein localises to the mitochondrion. Functionally, associates with the EF-Tu.GDP complex and induces the exchange of GDP to GTP. It remains bound to the aminoacyl-tRNA.EF-Tu.GTP complex up to the GTP hydrolysis stage on the ribosome. This chain is Elongation factor Ts, mitochondrial (Tsfm), found in Rattus norvegicus (Rat).